A 235-amino-acid polypeptide reads, in one-letter code: MFKLTEKGEKIQEMFDTIAPRYDFLNRLLSFGIDRKWRRFAVKQIRYAEGGRILDVATGTGDVALEIAAQTPASISIVGVDFSKEMVELGKEKVNCSPFAARISMQVAPCEAIPFADGSFDSVTIAFGIRNVVDRAQGLKEMHRILKADGRAVILEFSTPRLTLFKALYHFYFLKVLPVIGGLFSQFSAYKYLPDSVMEFPSQEEFKAIMAGVGFKNLKHFDLTGGIATVYVGEK.

Residues Thr-60 and Asp-81 each coordinate S-adenosyl-L-methionine.

This sequence belongs to the class I-like SAM-binding methyltransferase superfamily. MenG/UbiE family.

It catalyses the reaction a 2-demethylmenaquinol + S-adenosyl-L-methionine = a menaquinol + S-adenosyl-L-homocysteine + H(+). The catalysed reaction is a 2-methoxy-6-(all-trans-polyprenyl)benzene-1,4-diol + S-adenosyl-L-methionine = a 5-methoxy-2-methyl-3-(all-trans-polyprenyl)benzene-1,4-diol + S-adenosyl-L-homocysteine + H(+). It participates in quinol/quinone metabolism; menaquinone biosynthesis; menaquinol from 1,4-dihydroxy-2-naphthoate: step 2/2. Its pathway is cofactor biosynthesis; ubiquinone biosynthesis. Functionally, methyltransferase required for the conversion of demethylmenaquinol (DMKH2) to menaquinol (MKH2) and the conversion of 2-polyprenyl-6-methoxy-1,4-benzoquinol (DDMQH2) to 2-polyprenyl-3-methyl-6-methoxy-1,4-benzoquinol (DMQH2). This Geotalea uraniireducens (strain Rf4) (Geobacter uraniireducens) protein is Ubiquinone/menaquinone biosynthesis C-methyltransferase UbiE.